A 222-amino-acid polypeptide reads, in one-letter code: N-(5'-phosphoribosyl)anthranilate isomerase (222 aa).

The protein belongs to the TrpF family.

It catalyses the reaction N-(5-phospho-beta-D-ribosyl)anthranilate = 1-(2-carboxyphenylamino)-1-deoxy-D-ribulose 5-phosphate. Its pathway is amino-acid biosynthesis; L-tryptophan biosynthesis; L-tryptophan from chorismate: step 3/5. This Beijerinckia indica subsp. indica (strain ATCC 9039 / DSM 1715 / NCIMB 8712) protein is N-(5'-phosphoribosyl)anthranilate isomerase.